We begin with the raw amino-acid sequence, 232 residues long: Phosphatidylserine decarboxylase proenzyme (232 aa).

Residue serine 201 is the Schiff-base intermediate with substrate; via pyruvic acid of the active site. Residue serine 201 is modified to Pyruvic acid (Ser); by autocatalysis.

Belongs to the phosphatidylserine decarboxylase family. PSD-A subfamily. As to quaternary structure, heterodimer of a large membrane-associated beta subunit and a small pyruvoyl-containing alpha subunit. It depends on pyruvate as a cofactor. In terms of processing, is synthesized initially as an inactive proenzyme. Formation of the active enzyme involves a self-maturation process in which the active site pyruvoyl group is generated from an internal serine residue via an autocatalytic post-translational modification. Two non-identical subunits are generated from the proenzyme in this reaction, and the pyruvate is formed at the N-terminus of the alpha chain, which is derived from the carboxyl end of the proenzyme. The post-translation cleavage follows an unusual pathway, termed non-hydrolytic serinolysis, in which the side chain hydroxyl group of the serine supplies its oxygen atom to form the C-terminus of the beta chain, while the remainder of the serine residue undergoes an oxidative deamination to produce ammonia and the pyruvoyl prosthetic group on the alpha chain.

The protein resides in the cell membrane. It carries out the reaction a 1,2-diacyl-sn-glycero-3-phospho-L-serine + H(+) = a 1,2-diacyl-sn-glycero-3-phosphoethanolamine + CO2. The protein operates within phospholipid metabolism; phosphatidylethanolamine biosynthesis; phosphatidylethanolamine from CDP-diacylglycerol: step 2/2. Its function is as follows. Catalyzes the formation of phosphatidylethanolamine (PtdEtn) from phosphatidylserine (PtdSer). The protein is Phosphatidylserine decarboxylase proenzyme of Mycolicibacterium gilvum (strain PYR-GCK) (Mycobacterium gilvum (strain PYR-GCK)).